We begin with the raw amino-acid sequence, 91 residues long: Small ribosomal subunit protein bS20 (91 aa).

Disordered regions lie at residues 1–26 (MALR…RSRK) and 67–91 (HKNA…AQQS).

It belongs to the bacterial ribosomal protein bS20 family.

In terms of biological role, binds directly to 16S ribosomal RNA. The polypeptide is Small ribosomal subunit protein bS20 (Deinococcus deserti (strain DSM 17065 / CIP 109153 / LMG 22923 / VCD115)).